Consider the following 134-residue polypeptide: Holo-[acyl-carrier-protein] synthase (134 aa).

Mg(2+) is bound by residues aspartate 8 and glutamate 57.

It belongs to the P-Pant transferase superfamily. AcpS family. Mg(2+) is required as a cofactor.

The protein localises to the cytoplasm. It catalyses the reaction apo-[ACP] + CoA = holo-[ACP] + adenosine 3',5'-bisphosphate + H(+). Transfers the 4'-phosphopantetheine moiety from coenzyme A to a Ser of acyl-carrier-protein. This Agrobacterium fabrum (strain C58 / ATCC 33970) (Agrobacterium tumefaciens (strain C58)) protein is Holo-[acyl-carrier-protein] synthase.